We begin with the raw amino-acid sequence, 144 residues long: L-fucose mutarotase (144 aa).

The Proton donor role is filled by His-22. Substrate-binding positions include Asp-30, Arg-109, and Tyr-131 to Asn-133.

This sequence belongs to the RbsD / FucU family. FucU mutarotase subfamily. As to quaternary structure, homodecamer.

It is found in the cytoplasm. The enzyme catalyses alpha-L-fucose = beta-L-fucose. It functions in the pathway carbohydrate metabolism; L-fucose metabolism. In terms of biological role, involved in the anomeric conversion of L-fucose. The sequence is that of L-fucose mutarotase from Histophilus somni (strain 129Pt) (Haemophilus somnus).